We begin with the raw amino-acid sequence, 481 residues long: Glutamate--tRNA ligase (481 aa).

The short motif at 28 to 38 (PSPTGFLHLGG) is the 'HIGH' region element. The span at 139–148 (RYDGTWRPEP) shows a compositional bias: basic and acidic residues. The tract at residues 139–159 (RYDGTWRPEPGKTLPPVPADR) is disordered. A 'KMSKS' region motif is present at residues 260–264 (KLSKR). ATP is bound at residue Lys263.

This sequence belongs to the class-I aminoacyl-tRNA synthetase family. Glutamate--tRNA ligase type 1 subfamily. In terms of assembly, monomer.

It localises to the cytoplasm. It carries out the reaction tRNA(Glu) + L-glutamate + ATP = L-glutamyl-tRNA(Glu) + AMP + diphosphate. Functionally, catalyzes the attachment of glutamate to tRNA(Glu) in a two-step reaction: glutamate is first activated by ATP to form Glu-AMP and then transferred to the acceptor end of tRNA(Glu). The sequence is that of Glutamate--tRNA ligase from Bordetella parapertussis (strain 12822 / ATCC BAA-587 / NCTC 13253).